A 124-amino-acid polypeptide reads, in one-letter code: Small ribosomal subunit protein uS12 (124 aa).

Asp-90 bears the 3-methylthioaspartic acid mark.

This sequence belongs to the universal ribosomal protein uS12 family. As to quaternary structure, part of the 30S ribosomal subunit. Contacts proteins S8 and S17. May interact with IF1 in the 30S initiation complex.

In terms of biological role, with S4 and S5 plays an important role in translational accuracy. Interacts with and stabilizes bases of the 16S rRNA that are involved in tRNA selection in the A site and with the mRNA backbone. Located at the interface of the 30S and 50S subunits, it traverses the body of the 30S subunit contacting proteins on the other side and probably holding the rRNA structure together. The combined cluster of proteins S8, S12 and S17 appears to hold together the shoulder and platform of the 30S subunit. The protein is Small ribosomal subunit protein uS12 of Wolbachia sp. subsp. Drosophila simulans (strain wRi).